A 940-amino-acid chain; its full sequence is MISAHCNLRLLCSSDSSASASQVAGTTEVVENLVTNDNSPNIPEAIDRLFSDIANINRESMAEITDIQIEEMAVNLWNWALTIGGGWLVNEEQKIRLHYVACKLLSMCEASFASEQSIQRLIMMNMRIGKEWLDAGNFLIADECFQAAVASLEQLYVKLIQRSSPEADLTMEKITVESDHFRVLSYQAESAVAQGDFQRASMCVLQCKDMLMRLPQMTSSLHHLCYNFGVETQKNNKYEESSFWLSQSYDIGKMDKKSTGPEMLAKVLRLLATNYLDWDDTKYYDKALNAVNLANKEHLSSPGLFLKMKILLKGETSNEELLEAVMEILHLDMPLDFCLNIAKLLMDHERESVGFHFLTIIHERFKSSENIGKVLILHTDMLLQRKEELLAKEKIEEIFLAHQTGRQLTAESMNWLHNILWRQAASSFEVQNYTDALQWYYYSLRFYSTDEMDLDFTKLQRNMACCYLNLQQLDKAKEAVAEAERHDPRNVFTQFYIFKIAVIEGNSERALQAIITLENILTDEESEDNDLVAERGSPTMLLSLAAQFALENGQQIVAEKALEYLAQHSEDQEQVLTAVKCLLRFLLPKIAEMPESEDKKKEMDRLLTCLNRAFVKLSQPFGEEALSLESRANEAQWFRKTAWNLAVQCDKDPVMMREFFILSYKMSQFCPSDQVILIARKTCLLMAVAVDLEQGRKASTAFEQTMFLSRALEEIQTCNDIHNFLKQTGTFSNDSCEKLLLLYEFEVRAKLNDPLLESFLESVWELPHLETKTFETIAIIAMEKPAHYPLIALKALKKALLLYKKEEPIDISQYSKCMHNLVNLSVPDGASNVELCPLEEVWGYFEDALSHISRTKDYPEMEILWLMVKSWNTGVLMFSRSKYASAEKWCGLALRFLNHLTSFKESYETQMNMLYSQLVEALSNNKGPVFHEHGYWSKSD.

This sequence belongs to the SPO22 family. Interacts with SYCP2. Interacts with PBXIP1; may prevent interaction between PBXIP1 and ESR2. Interacts with SHOC1. Interacts with REDIC1. In terms of tissue distribution, testis-specific. Not expressed in adult ovaries.

The protein resides in the chromosome. Regulator of crossing-over during meiosis. Involved in initiation and/or maintenance of chromosome synapsis and formation of crossovers. This Homo sapiens (Human) protein is Testis-expressed protein 11 (TEX11).